A 464-amino-acid chain; its full sequence is Protein FAM90A12 (464 aa).

Disordered regions lie at residues 1–42 (MMAR…DPRL), 70–389 (PATL…HDGA), and 411–437 (APSFHSPEKPGAFLAQSPHVSEKSEAP). Composition is skewed to basic and acidic residues over residues 74–89 (GKKEGKENLKPWKPRA) and 97–114 (NKDKGEKEERPRQQDPQR). Low complexity predominate over residues 180–197 (LASLSPLRKASLSSSSSL).

Belongs to the FAM90 family.

The sequence is that of Protein FAM90A12 from Homo sapiens (Human).